A 667-amino-acid polypeptide reads, in one-letter code: Long-chain fatty acid transport protein 3 (667 aa).

The helical transmembrane segment at A3–W23 threads the bilayer. The tract at residues T114 to T144 is disordered. Positions R130 to T144 are enriched in low complexity. ATP is bound by residues T272–T276, H315, T412, D512, R527, and K619.

This sequence belongs to the ATP-dependent AMP-binding enzyme family. As to expression, expressed at high levels in adrenal gland, testis and ovary. Expressed at lower levels in adult brain. Found in adrenal cortical cells, spermatocytes and interstitial cells of the testis, theca cells of the ovary, cerebral cortical neurons, and cerebellar Purkinje cells (at protein level).

It is found in the mitochondrion membrane. The catalysed reaction is a fatty acid(in) = a fatty acid(out). It catalyses the reaction a long-chain fatty acid + ATP + CoA = a long-chain fatty acyl-CoA + AMP + diphosphate. It carries out the reaction (5Z,8Z,11Z,14Z)-eicosatetraenoate + ATP + CoA = (5Z,8Z,11Z,14Z)-eicosatetraenoyl-CoA + AMP + diphosphate. The enzyme catalyses hexadecanoate + ATP + CoA = hexadecanoyl-CoA + AMP + diphosphate. The catalysed reaction is (9Z)-octadecenoate + ATP + CoA = (9Z)-octadecenoyl-CoA + AMP + diphosphate. It catalyses the reaction (9Z,12Z)-octadecadienoate + ATP + CoA = (9Z,12Z)-octadecadienoyl-CoA + AMP + diphosphate. It carries out the reaction a very long-chain fatty acid + ATP + CoA = a very long-chain fatty acyl-CoA + AMP + diphosphate. The enzyme catalyses tetracosanoate + ATP + CoA = tetracosanoyl-CoA + AMP + diphosphate. Functionally, mainly functions as an acyl-CoA ligase catalyzing the ATP-dependent formation of fatty acyl-CoA using LCFA and very-long-chain fatty acids (VLCFA) as substrates. Can mediate the levels of long-chain fatty acids (LCFA) in the cell by facilitating their transport across membranes. The polypeptide is Long-chain fatty acid transport protein 3 (Slc27a3) (Mus musculus (Mouse)).